The primary structure comprises 129 residues: Glycine cleavage system H protein (129 aa).

Residues Glu-24–Lys-106 form the Lipoyl-binding domain. Lys-65 is modified (N6-lipoyllysine).

The protein belongs to the GcvH family. The glycine cleavage system is composed of four proteins: P, T, L and H. (R)-lipoate is required as a cofactor.

Its function is as follows. The glycine cleavage system catalyzes the degradation of glycine. The H protein shuttles the methylamine group of glycine from the P protein to the T protein. The protein is Glycine cleavage system H protein of Aeromonas salmonicida (strain A449).